A 188-amino-acid polypeptide reads, in one-letter code: Mitochondrial import receptor subunit TOM20-1 (188 aa).

Topologically, residues 1–164 (MDKLNFFEEI…VVKNKKSSDE (164 aa)) are cytoplasmic. Residues 165–182 (KYIVMGWVILAIGVVACI) traverse the membrane as a helical segment. Topologically, residues 183 to 188 (SFRKLR) are mitochondrial intermembrane.

It belongs to the Tom20 family. As to quaternary structure, forms part of the preprotein translocase complex of the outer mitochondrial membrane (TOM complex) which consists of at least 6 different proteins (TOM5, TOM6, TOM7, TOM20, TOM22/TOM9 and TOM40). Component of a mitochondrial large protein complex that contains, at least, MIC60, DGS1, TOM40, TOM20 proteins, and petC/RISP. Barely detected in roots.

It localises to the mitochondrion outer membrane. Functionally, central component of the receptor complex responsible for the recognition and translocation of cytosolically synthesized mitochondrial preproteins. Together with TOM22 functions as the transit peptide receptor at the surface of the mitochondrion outer membrane and facilitates the movement of preproteins into the translocation pore. In Arabidopsis thaliana (Mouse-ear cress), this protein is Mitochondrial import receptor subunit TOM20-1.